A 393-amino-acid chain; its full sequence is Phosphopentomutase (393 aa).

Mn(2+)-binding residues include Asp11, Asp282, His287, Asp323, His324, and His335.

Belongs to the phosphopentomutase family. Mn(2+) is required as a cofactor.

Its subcellular location is the cytoplasm. It catalyses the reaction 2-deoxy-alpha-D-ribose 1-phosphate = 2-deoxy-D-ribose 5-phosphate. The enzyme catalyses alpha-D-ribose 1-phosphate = D-ribose 5-phosphate. The protein operates within carbohydrate degradation; 2-deoxy-D-ribose 1-phosphate degradation; D-glyceraldehyde 3-phosphate and acetaldehyde from 2-deoxy-alpha-D-ribose 1-phosphate: step 1/2. Isomerase that catalyzes the conversion of deoxy-ribose 1-phosphate (dRib-1-P) and ribose 1-phosphate (Rib-1-P) to deoxy-ribose 5-phosphate (dRib-5-P) and ribose 5-phosphate (Rib-5-P), respectively. The polypeptide is Phosphopentomutase (Caldanaerobacter subterraneus subsp. tengcongensis (strain DSM 15242 / JCM 11007 / NBRC 100824 / MB4) (Thermoanaerobacter tengcongensis)).